We begin with the raw amino-acid sequence, 158 residues long: 6,7-dimethyl-8-ribityllumazine synthase (158 aa).

5-amino-6-(D-ribitylamino)uracil-binding positions include Trp28, 59-61, and 81-83; these read TVE and VVV. 86–87 is a binding site for (2S)-2-hydroxy-3-oxobutyl phosphate; sequence DT. His89 serves as the catalytic Proton donor. Phe114 is a 5-amino-6-(D-ribitylamino)uracil binding site. Arg128 lines the (2S)-2-hydroxy-3-oxobutyl phosphate pocket.

Belongs to the DMRL synthase family.

It catalyses the reaction (2S)-2-hydroxy-3-oxobutyl phosphate + 5-amino-6-(D-ribitylamino)uracil = 6,7-dimethyl-8-(1-D-ribityl)lumazine + phosphate + 2 H2O + H(+). Its pathway is cofactor biosynthesis; riboflavin biosynthesis; riboflavin from 2-hydroxy-3-oxobutyl phosphate and 5-amino-6-(D-ribitylamino)uracil: step 1/2. Functionally, catalyzes the formation of 6,7-dimethyl-8-ribityllumazine by condensation of 5-amino-6-(D-ribitylamino)uracil with 3,4-dihydroxy-2-butanone 4-phosphate. This is the penultimate step in the biosynthesis of riboflavin. The protein is 6,7-dimethyl-8-ribityllumazine synthase of Micrococcus luteus (strain ATCC 4698 / DSM 20030 / JCM 1464 / CCM 169 / CCUG 5858 / IAM 1056 / NBRC 3333 / NCIMB 9278 / NCTC 2665 / VKM Ac-2230) (Micrococcus lysodeikticus).